A 562-amino-acid polypeptide reads, in one-letter code: Serine palmitoyltransferase 2 (562 aa).

A helical membrane pass occupies residues 61–81; that stretch reads LITYLNYLILIILGHIHDFLG. Lysine 365 bears the N6-(pyridoxal phosphate)lysine mark.

The protein belongs to the class-II pyridoxal-phosphate-dependent aminotransferase family. The cofactor is pyridoxal 5'-phosphate.

The protein resides in the membrane. It catalyses the reaction L-serine + hexadecanoyl-CoA + H(+) = 3-oxosphinganine + CO2 + CoA. It functions in the pathway lipid metabolism; sphingolipid metabolism. The polypeptide is Serine palmitoyltransferase 2 (LCB2) (Kluyveromyces lactis (strain ATCC 8585 / CBS 2359 / DSM 70799 / NBRC 1267 / NRRL Y-1140 / WM37) (Yeast)).